A 264-amino-acid chain; its full sequence is 3-methyl-2-oxobutanoate hydroxymethyltransferase (264 aa).

Aspartate 45 and aspartate 84 together coordinate Mg(2+). Residues 45–46 (DS), aspartate 84, and lysine 113 each bind 3-methyl-2-oxobutanoate. Glutamate 115 is a Mg(2+) binding site. Glutamate 182 acts as the Proton acceptor in catalysis.

The protein belongs to the PanB family. In terms of assembly, homodecamer; pentamer of dimers. It depends on Mg(2+) as a cofactor.

Its subcellular location is the cytoplasm. It catalyses the reaction 3-methyl-2-oxobutanoate + (6R)-5,10-methylene-5,6,7,8-tetrahydrofolate + H2O = 2-dehydropantoate + (6S)-5,6,7,8-tetrahydrofolate. It functions in the pathway cofactor biosynthesis; (R)-pantothenate biosynthesis; (R)-pantoate from 3-methyl-2-oxobutanoate: step 1/2. Functionally, catalyzes the reversible reaction in which hydroxymethyl group from 5,10-methylenetetrahydrofolate is transferred onto alpha-ketoisovalerate to form ketopantoate. The sequence is that of 3-methyl-2-oxobutanoate hydroxymethyltransferase from Caldicellulosiruptor saccharolyticus (strain ATCC 43494 / DSM 8903 / Tp8T 6331).